Consider the following 272-residue polypeptide: Cell division protein FtsQ (272 aa).

Residues 1–43 (MEYNPPNTRERIVARRQRMRRNSTEPVVPGWRWRLREGLRSGR) are Cytoplasmic-facing. The chain crosses the membrane as a helical span at residues 44–64 (IVSGIVFVISCFALFYVLFSS). Over 65–272 (RFRVQTVEVV…FYQYRPDGSS (208 aa)) the chain is Extracellular. The POTRA domain occupies 66–133 (FRVQTVEVVG…DRARIVIVER (68 aa)).

The protein belongs to the FtsQ/DivIB family. FtsQ subfamily.

It localises to the cell membrane. Functionally, essential cell division protein. The protein is Cell division protein FtsQ of Chloroflexus aurantiacus (strain ATCC 29366 / DSM 635 / J-10-fl).